Reading from the N-terminus, the 570-residue chain is Proline--tRNA ligase (570 aa).

This sequence belongs to the class-II aminoacyl-tRNA synthetase family. ProS type 1 subfamily. As to quaternary structure, homodimer.

The protein resides in the cytoplasm. It carries out the reaction tRNA(Pro) + L-proline + ATP = L-prolyl-tRNA(Pro) + AMP + diphosphate. Catalyzes the attachment of proline to tRNA(Pro) in a two-step reaction: proline is first activated by ATP to form Pro-AMP and then transferred to the acceptor end of tRNA(Pro). As ProRS can inadvertently accommodate and process non-cognate amino acids such as alanine and cysteine, to avoid such errors it has two additional distinct editing activities against alanine. One activity is designated as 'pretransfer' editing and involves the tRNA(Pro)-independent hydrolysis of activated Ala-AMP. The other activity is designated 'posttransfer' editing and involves deacylation of mischarged Ala-tRNA(Pro). The misacylated Cys-tRNA(Pro) is not edited by ProRS. In Clostridium perfringens (strain ATCC 13124 / DSM 756 / JCM 1290 / NCIMB 6125 / NCTC 8237 / Type A), this protein is Proline--tRNA ligase.